The sequence spans 81 residues: YcgL domain-containing protein Tgr7_3126 (81 aa).

The 81-residue stretch at 1-81 (MQVYVYKSRR…QMPPQNERPL (81 aa)) folds into the YcgL domain.

The polypeptide is YcgL domain-containing protein Tgr7_3126 (Thioalkalivibrio sulfidiphilus (strain HL-EbGR7)).